We begin with the raw amino-acid sequence, 99 residues long: Nucleoid-associated protein EbfC (99 aa).

Belongs to the YbaB/EbfC family. Homodimer.

The protein localises to the cytoplasm. It is found in the nucleoid. In terms of biological role, binds to DNA and alters its conformation. May be involved in regulation of gene expression, nucleoid organization and DNA protection. The sequence is that of Nucleoid-associated protein EbfC from Borrelia duttonii (strain Ly).